The primary structure comprises 318 residues: tRNA dimethylallyltransferase (318 aa).

An ATP-binding site is contributed by 9 to 16; sequence GATASGKT. 11–16 is a substrate binding site; the sequence is TASGKT. 2 interaction with substrate tRNA regions span residues 34–37 and 158–162; these read DSAQ and QRIIR.

Belongs to the IPP transferase family. Monomer. Mg(2+) is required as a cofactor.

It carries out the reaction adenosine(37) in tRNA + dimethylallyl diphosphate = N(6)-dimethylallyladenosine(37) in tRNA + diphosphate. Functionally, catalyzes the transfer of a dimethylallyl group onto the adenine at position 37 in tRNAs that read codons beginning with uridine, leading to the formation of N6-(dimethylallyl)adenosine (i(6)A). The chain is tRNA dimethylallyltransferase from Dichelobacter nodosus (strain VCS1703A).